The sequence spans 514 residues: MARPWLSASVLITAVILLVDYLNYYRLRKRLGGIPVVGDASYFWRRIRWTESDTNFQKVIQHGYDTFSKKAKPFAFWGQHEDFILVLPPGSCEEVKHLGPEKLNFLQAVEDSYHFKLHTNILGRSHVDAVRQSVNKNMNQLHEIVVKKAEETIPKLFDDIAASNEPFAAFLTIWHLVHIVSASYLVGTEFCANEEYLQAIEYYCINVPNFIYGYFWVPVPLRRLYWYLSPQGYKVRACKAKLKTFIVPKIRETISAWQNGQKSSSYTLLGAMLDLKAQKGQIKRDPTAMTKAELERQIDIFSDEMIFTGFDSAGPVACMVTQLLFEALRDKDLTKALRQELKSALEANNGQWNVQAMNLTPKLDSFTRESLRVNGPTLLSVTRTVMEPMQLKSGLSLQSGSIISSPSWLIHNDEDNYENAHQFDPYRFYNPSTNAVTTKVTTASTNFLGYGYGTQMCPGRHLGIKMSQILFSKLLMRYDGEFADAKAGKPANIVTSGQVLPPYYAKVILKRRGI.

The chain crosses the membrane as a helical span at residues tryptophan 5–tyrosine 25. Cysteine 457 serves as a coordination point for heme.

Belongs to the cytochrome P450 family. Requires heme as cofactor.

Its subcellular location is the membrane. It functions in the pathway mycotoxin biosynthesis. Its function is as follows. Cytochrome P450 monooxygenase; part of the gene cluster that mediates the biosynthesis of 11'-deoxyverticillin A, one of the dimeric epipolythiodioxopiperazines (ETPs) from the verticillin family that act as mycotoxins. 11'-deoxyverticillin A is required for normal conidiation. The nonribosomal peptide synthetase verP is speculated to be responsible for condensation of amino acids to form the carbon skeleton of verticillin, whereas the cluster-specific tailoring enzymes are involved in further modifications leading to the production of 11'-deoxyverticillin A. The polypeptide is Cytochrome P450 monooxygenase verB (Clonostachys rogersoniana).